The sequence spans 466 residues: Anthocyanidin 3-O-glucosyltransferase 1 (466 aa).

The active-site Proton acceptor is the H22. Positions 22 and 87 each coordinate an anthocyanidin. D122 serves as the catalytic Charge relay. Position 145 (T145) interacts with UDP-alpha-D-glucose. H154 contributes to the an anthocyanidin binding site. Residues A346, Q348, H363, W366, N367, S368, and E371 each contribute to the UDP-alpha-D-glucose site. Residue G386 participates in an anthocyanidin binding. UDP-alpha-D-glucose contacts are provided by D387 and Q388.

This sequence belongs to the UDP-glycosyltransferase family. As to expression, highest expression detected in receptacles and achenes, with very low levels detected in runners, leaves, flowers, crowns and green receptacles.

It catalyses the reaction an anthocyanidin + UDP-alpha-D-glucose + H(+) = an anthocyanidin 3-O-beta-D-glucoside + UDP. The catalysed reaction is cyanidin + UDP-alpha-D-glucose = cyanidin 3-O-beta-D-glucoside + UDP + H(+). It carries out the reaction pelargonidin + UDP-alpha-D-glucose = pelargonidin 3-O-beta-D-glucoside + UDP. The enzyme catalyses peonidin + UDP-alpha-D-glucose = peonidin 3-O-beta-D-glucoside + UDP. It catalyses the reaction delphinidin + UDP-alpha-D-glucose = delphinidin 3-O-beta-D-glucoside + UDP. The catalysed reaction is a flavonol + UDP-alpha-D-glucose = a flavonol 3-O-beta-D-glucoside + UDP + H(+). It functions in the pathway pigment biosynthesis; anthocyanin biosynthesis. In terms of biological role, in the presence of other necessary color factors, this glycosylation reaction allows the accumulation of anthocyanin pigments. Uses UDP-Glc as a sugar donor, but not UDP-Gal or UDP-GlcUA. Anthocyanidins are the preferred substrates in vivo, but flavonols can also be glucosylated in vitro. This is Anthocyanidin 3-O-glucosyltransferase 1 from Fragaria ananassa (Strawberry).